Consider the following 332-residue polypeptide: 4-hydroxy-3-methylbut-2-enyl diphosphate reductase (332 aa).

Position 34 (Cys-34) interacts with [4Fe-4S] cluster. The (2E)-4-hydroxy-3-methylbut-2-enyl diphosphate site is built by His-63 and His-96. Dimethylallyl diphosphate contacts are provided by His-63 and His-96. His-63 and His-96 together coordinate isopentenyl diphosphate. Residue Cys-118 coordinates [4Fe-4S] cluster. His-146 is a (2E)-4-hydroxy-3-methylbut-2-enyl diphosphate binding site. His-146 lines the dimethylallyl diphosphate pocket. Isopentenyl diphosphate is bound at residue His-146. Glu-148 serves as the catalytic Proton donor. Thr-186 provides a ligand contact to (2E)-4-hydroxy-3-methylbut-2-enyl diphosphate. Cys-216 contributes to the [4Fe-4S] cluster binding site. Residues Ser-244, Ser-245, Asn-246, and Ser-289 each contribute to the (2E)-4-hydroxy-3-methylbut-2-enyl diphosphate site. Dimethylallyl diphosphate contacts are provided by Ser-244, Ser-245, Asn-246, and Ser-289. 4 residues coordinate isopentenyl diphosphate: Ser-244, Ser-245, Asn-246, and Ser-289.

It belongs to the IspH family. [4Fe-4S] cluster serves as cofactor.

It catalyses the reaction isopentenyl diphosphate + 2 oxidized [2Fe-2S]-[ferredoxin] + H2O = (2E)-4-hydroxy-3-methylbut-2-enyl diphosphate + 2 reduced [2Fe-2S]-[ferredoxin] + 2 H(+). The catalysed reaction is dimethylallyl diphosphate + 2 oxidized [2Fe-2S]-[ferredoxin] + H2O = (2E)-4-hydroxy-3-methylbut-2-enyl diphosphate + 2 reduced [2Fe-2S]-[ferredoxin] + 2 H(+). It functions in the pathway isoprenoid biosynthesis; dimethylallyl diphosphate biosynthesis; dimethylallyl diphosphate from (2E)-4-hydroxy-3-methylbutenyl diphosphate: step 1/1. The protein operates within isoprenoid biosynthesis; isopentenyl diphosphate biosynthesis via DXP pathway; isopentenyl diphosphate from 1-deoxy-D-xylulose 5-phosphate: step 6/6. Its function is as follows. Catalyzes the conversion of 1-hydroxy-2-methyl-2-(E)-butenyl 4-diphosphate (HMBPP) into a mixture of isopentenyl diphosphate (IPP) and dimethylallyl diphosphate (DMAPP). Acts in the terminal step of the DOXP/MEP pathway for isoprenoid precursor biosynthesis. This is 4-hydroxy-3-methylbut-2-enyl diphosphate reductase from Mycobacterium ulcerans (strain Agy99).